Consider the following 165-residue polypeptide: Adenosine 5'-monophosphoramidase HINT3 (165 aa).

Residues 1 to 23 (MAEKQAGLVGEPDPEGSSPGTSE) are disordered. The residue at position 2 (Ala-2) is an N-acetylalanine. Residues 32-143 (VFCRVAAGQE…PVKEFGFLSK (112 aa)) enclose the HIT domain. Residues 59-60 (DI) and 128-130 (HLH) contribute to the AMP site. Positions 126–130 (HLHLH) match the Histidine triad motif motif. Catalysis depends on His-128, which acts as the Tele-AMP-histidine intermediate.

Belongs to the HINT family. Forms dimers to octamers and even larger oligomer. Interacts with CALM1.

It localises to the cytoplasm. The protein resides in the nucleus. The catalysed reaction is adenosine 5'-phosphoramidate + H2O = AMP + NH4(+). Its function is as follows. Exhibits adenosine 5'-monophosphoramidase activity, hydrolyzing purine nucleotide phosphoramidates with a single phosphate group such as adenosine 5'monophosphoramidate (AMP-NH2) to yield AMP and NH2. Hydrolyzes lysyl-AMP (AMP-N-epsilon-(N-alpha-acetyl lysine methyl ester)) generated by lysine tRNA ligase. In Mus musculus (Mouse), this protein is Adenosine 5'-monophosphoramidase HINT3 (Hint3).